Here is a 960-residue protein sequence, read N- to C-terminus: MLLLLLVPLFLRPLGAGGAQTPNATSEGCQIIHPPWEGGIRYRGLTRDQVKAINFLPVDYEIEYVCRGEREVVGPKVRKCLANGSWTDMDTPSRCVRICSKSYLTLENGKVFLTGGDLPALDGARVEFRCDPDFHLVGSSRSVCSQGQWSTPKPHCQVNRTPHSERRAVYIGALFPMSGGWPGGQACQPAVEMALEDVNSRRDILPDYELKLIHHDSKCDPGQATKYLYELLYNDPIKIILMPGCSSVSTLVAEAARMWNLIVLSYGSSSPALSNRQRFPTFFRTHPSATLHNPTRVKLFEKWGWKKIATIQQTTEVFTSTLDDLEERVKEAGIEITFRQSFFSDPAVPVKNLKRQDARIIVGLFYETEARKVFCEVYKERLFGKKYVWFLIGWYADNWFKTYDPSINCTVEEMTEAVEGHITTEIVMLNPANTRSISNMTSQEFVEKLTKRLKRHPEETGGFQEAPLAYDAIWALALALNKTSGGGGRSGVRLEDFNYNNQTITDQIYRAMNSSSFEGVSGHVVFDASGSRMAWTLIEQLQGGSYKKIGYYDSTKDDLSWSKTDKWIGGSPPADQTLVIKTFRFLSQKLFISVSVLSSLGIVLAVVCLSFNIYNSHVRYIQNSQPNLNNLTAVGCSLALAAVFPLGLDGYHIGRSQFPFVCQARLWLLGLGFSLGYGSMFTKIWWVHTVFTKKEEKKEWRKTLEPWKLYATVGLLVGMDVLTLAIWQIVDPLHRTIETFAKEEPKEDIDVSILPQLEHCSSKKMNTWLGIFYGYKGLLLLLGIFLAYETKSVSTEKINDHRAVGMAIYNVAVLCLITAPVTMILSSQQDAAFAFASLAIVFSSYITLVVLFVPKMRRLITRGEWQSETQDTMKTGSSTNNNEEEKSRLLEKENRELEKIIAEKEERVSELRHQLQSRQQLRSRRHPPTPPDPSGGLPRGPSEPPDRLSCDGSRVHLLYK.

A signal peptide spans 1-19 (MLLLLLVPLFLRPLGAGGA). Over 20-590 (QTPNATSEGC…KTFRFLSQKL (571 aa)) the chain is Extracellular. N-linked (GlcNAc...) asparagine glycans are attached at residues asparagine 23 and asparagine 83. Sushi domains lie at 29–95 (CQII…PSRC) and 97–158 (RICS…HCQV). 3 disulfide bridges follow: cysteine 99-cysteine 144, cysteine 130-cysteine 156, and cysteine 219-cysteine 245. The 4-aminobutanoate site is built by serine 246, serine 269, histidine 286, and tyrosine 366. Residues cysteine 375 and cysteine 409 are joined by a disulfide bond. 2 N-linked (GlcNAc...) asparagine glycosylation sites follow: asparagine 408 and asparagine 439. 4-aminobutanoate is bound at residue glutamate 465. N-linked (GlcNAc...) asparagine glycans are attached at residues asparagine 481, asparagine 501, and asparagine 513. Residues 591–611 (FISVSVLSSLGIVLAVVCLSF) form a helical membrane-spanning segment. Residues 612-630 (NIYNSHVRYIQNSQPNLNN) are Cytoplasmic-facing. Residues 631–651 (LTAVGCSLALAAVFPLGLDGY) form a helical membrane-spanning segment. The Extracellular segment spans residues 652-666 (HIGRSQFPFVCQARL). The helical transmembrane segment at 667–687 (WLLGLGFSLGYGSMFTKIWWV) threads the bilayer. At 688 to 709 (HTVFTKKEEKKEWRKTLEPWKL) the chain is on the cytoplasmic side. The helical transmembrane segment at 710 to 730 (YATVGLLVGMDVLTLAIWQIV) threads the bilayer. The Extracellular portion of the chain corresponds to 731-767 (DPLHRTIETFAKEEPKEDIDVSILPQLEHCSSKKMNT). The chain crosses the membrane as a helical span at residues 768 to 788 (WLGIFYGYKGLLLLLGIFLAY). Residues 789-803 (ETKSVSTEKINDHRA) are Cytoplasmic-facing. Residues 804–824 (VGMAIYNVAVLCLITAPVTMI) traverse the membrane as a helical segment. At 825–832 (LSSQQDAA) the chain is on the extracellular side. A helical membrane pass occupies residues 833 to 853 (FAFASLAIVFSSYITLVVLFV). Over 854–960 (PKMRRLITRG…DGSRVHLLYK (107 aa)) the chain is Cytoplasmic. Positions 866-879 (QSETQDTMKTGSST) are enriched in polar residues. Disordered stretches follow at residues 866-891 (QSET…RLLE) and 908-960 (VSEL…LLYK). Residues 870–924 (QDTMKTGSSTNNNEEEKSRLLEKENRELEKIIAEKEERVSELRHQLQSRQQLRSR) are a coiled coil. Threonine 872 carries the post-translational modification Phosphothreonine. The interaction with ATF4 stretch occupies residues 887–915 (SRLLEKENRELEKIIAEKEERVSELRHQL). Phosphothreonine is present on threonine 929.

This sequence belongs to the G-protein coupled receptor 3 family. GABA-B receptor subfamily. In terms of assembly, heterodimer of GABBR1 and GABBR2. Homodimers may form, but are inactive. Interacts (via C-terminus) with ATF4 (via leucine zipper domain). Interacts with JAKMIP1. As to expression, ubiquitously expressed in tissues including the forebrain, cerebellum, eye, atrium, ventricle, lung, stomach, small intestine, colon, liver, spleen, kidney, urinary bladder and skeletal muscle. Expressed at low levels in testis, and more highly in brain regions. Expression is high the brain regions including cerebral cortical layers, with higher expression in VIb than in the II-V layers, pyramidal CA1-CA3 cell layers and granular cell layers of the hippocampus, granular cell layers of the dentate gyrus, including the caudate, putamen, nucleus accumbens and olfactory tubercle, the granular layer cell layers of the medial habenula, in the cerebellum, predominantly in Purkinje cells, and in the granule cell layer. Also expressed in areas of the brain including the medial geniculate nucleus, substantia nigra, pars compacta, the ventral tegmental area, and in several thalamic, amygdaloid and hypothalamic nuclei, such as the arcuate nucleus of the hypothalamus and mammilary bodies of the hypothalamus. Expressed in the amacrine cell of the retina. In terms of tissue distribution, expressed in the brain, spinal cord, stomach, testis, adrenal gland, pituitary, spleen and prostate. Expressed in the brain, spinal cord, stomach, testis, kidney and liver. As to expression, ubiquitously expressed. In terms of tissue distribution, expressed in the forebrain, cerebellum, eye, kidney and urinary bladder. Ubiquitously expressed with high expression in the pyramidal CA1-CA3 cell layers of the hippocampus, the granule cell layers of the dentate gyrus and olfactory tubercle, the whole cortex, and Purkinje cells of the cerebellum. Moderate expression in the granule cell layer of the cerebellum.

Its subcellular location is the cell membrane. The protein localises to the postsynaptic cell membrane. The protein resides in the cell projection. It localises to the dendrite. It is found in the perikaryon. Its function is as follows. Component of a heterodimeric G-protein coupled receptor for GABA, formed by GABBR1 and GABBR2. Within the heterodimeric GABA receptor, only GABBR1 seems to bind agonists, while GABBR2 mediates coupling to G proteins. Ligand binding causes a conformation change that triggers signaling via guanine nucleotide-binding proteins (G proteins) and modulates the activity of down-stream effectors, such as adenylate cyclase. Signaling inhibits adenylate cyclase, stimulates phospholipase A2, activates potassium channels, inactivates voltage-dependent calcium-channels and modulates inositol phospholipid hydrolysis. Calcium is required for high affinity binding to GABA. Plays a critical role in the fine-tuning of inhibitory synaptic transmission. Pre-synaptic GABA receptor inhibits neurotransmitter release by down-regulating high-voltage activated calcium channels, whereas postsynaptic GABA receptor decreases neuronal excitability by activating a prominent inwardly rectifying potassium (Kir) conductance that underlies the late inhibitory postsynaptic potentials. Not only implicated in synaptic inhibition but also in hippocampal long-term potentiation, slow wave sleep, muscle relaxation and antinociception. In Rattus norvegicus (Rat), this protein is Gamma-aminobutyric acid type B receptor subunit 1 (Gabbr1).